The sequence spans 239 residues: tRNA (guanine-N(1)-)-methyltransferase (239 aa).

S-adenosyl-L-methionine contacts are provided by residues Gly108 and Val128–Val133.

This sequence belongs to the RNA methyltransferase TrmD family. As to quaternary structure, homodimer.

It localises to the cytoplasm. The enzyme catalyses guanosine(37) in tRNA + S-adenosyl-L-methionine = N(1)-methylguanosine(37) in tRNA + S-adenosyl-L-homocysteine + H(+). Specifically methylates guanosine-37 in various tRNAs. This chain is tRNA (guanine-N(1)-)-methyltransferase, found in Helicobacter hepaticus (strain ATCC 51449 / 3B1).